The chain runs to 69 residues: Cell division protein CrgA (69 aa).

The next 2 membrane-spanning stretches (helical) occupy residues 14 to 34 and 45 to 65; these read VWFP…MVLF and AVGT…FAMM.

This sequence belongs to the CrgA family.

It is found in the cell membrane. In terms of biological role, involved in cell division. This chain is Cell division protein CrgA, found in Tropheryma whipplei (strain TW08/27) (Whipple's bacillus).